Here is a 417-residue protein sequence, read N- to C-terminus: Probable diacetyl reductase [(R)-acetoin forming] 2 (417 aa).

Cysteine 39 serves as a coordination point for Zn(2+). Serine 63 bears the Phosphoserine mark. Residues histidine 64, cysteine 120, cysteine 123, cysteine 131, and glutamine 173 each contribute to the Zn(2+) site. The interval glycine 380 to threonine 417 is disordered. Residues glutamate 381–threonine 417 show a composition bias toward basic and acidic residues.

Belongs to the zinc-containing alcohol dehydrogenase family. The cofactor is Zn(2+).

It is found in the cytoplasm. It localises to the nucleus. The enzyme catalyses (R)-acetoin + NAD(+) = diacetyl + NADH + H(+). Its function is as follows. Catalyzes the irreversible reduction of 2,3-butanediol to (S)-acetoin in the presence of NADH. The protein is Probable diacetyl reductase [(R)-acetoin forming] 2 (BDH2) of Saccharomyces cerevisiae (strain ATCC 204508 / S288c) (Baker's yeast).